The chain runs to 433 residues: Trigger factor (433 aa).

The PPIase FKBP-type domain maps to 163–248 (GDTVNIDFSG…VNEIKFKEVP (86 aa)).

The protein belongs to the FKBP-type PPIase family. Tig subfamily.

It is found in the cytoplasm. It catalyses the reaction [protein]-peptidylproline (omega=180) = [protein]-peptidylproline (omega=0). Its function is as follows. Involved in protein export. Acts as a chaperone by maintaining the newly synthesized protein in an open conformation. Functions as a peptidyl-prolyl cis-trans isomerase. The protein is Trigger factor of Staphylococcus aureus (strain Newman).